The chain runs to 121 residues: Large ribosomal subunit protein uL18 (121 aa).

The protein belongs to the universal ribosomal protein uL18 family. As to quaternary structure, part of the 50S ribosomal subunit; part of the 5S rRNA/L5/L18/L25 subcomplex. Contacts the 5S and 23S rRNAs.

Its function is as follows. This is one of the proteins that bind and probably mediate the attachment of the 5S RNA into the large ribosomal subunit, where it forms part of the central protuberance. The sequence is that of Large ribosomal subunit protein uL18 from Burkholderia multivorans (strain ATCC 17616 / 249).